We begin with the raw amino-acid sequence, 306 residues long: Transcription factor MYBS1 (306 aa).

The Myb-like domain maps to 18-73 (WTREDDKAFENALAACAAPPPADGGAPDDDWFAALAASVPGARSAEEVRRHYEALV). A Nuclear export signal 1 motif is present at residues 72-86 (LVEDVAAIDAGRVPL). A disordered region spans residues 89–142 (YAGEESAAPPDGAGAAAAASKDGGHRRDERKGGGGGYDGGKSCSKAEQERRKGI). Residues 92-109 (EESAAPPDGAGAAAAASK) are compositionally biased toward low complexity. 2 stretches are compositionally biased toward basic and acidic residues: residues 110 to 120 (DGGHRRDERKG) and 132 to 142 (SKAEQERRKGI). The Nuclear localization signal 1 signature appears at 133-140 (KAEQERRK). An HTH myb-type domain is found at 136–192 (QERRKGIPWTEEEHRLFLLGLDKFGKGDWRSISRNFVISRTPTQVASHAQKYFIRLN). The H-T-H motif DNA-binding region spans 164-188 (WRSISRNFVISRTPTQVASHAQKYF). Residues 196–200 (RDRRR) carry the Nuclear localization signal 2 motif. The Nuclear export signal 2 signature appears at 203-215 (IHDITSVTAGDQV). A compositionally biased stretch (low complexity) spans 228-241 (ATGNPAAAALGPPG). Residues 228-255 (ATGNPAAAALGPPGMKHHHHHHPGGAPP) form a disordered region.

As to quaternary structure, homodimer. Interacts with GAMYB. Expressed in aboveground tissues, with the highest level in leaves.

It is found in the nucleus. The protein localises to the cytoplasm. Functionally, transcription activator that binds to 5'-TATCCA-3' elements in gene promoters. Derepresses strongly the sugar-repressed transcription of promoters containing SRS or 5'-TATCCA-3' elements. Functions with GAMYB to integrate diverse nutrient starvation and gibberellin (GA) signaling pathways during germination of grains. Sugar, nitrogen and phosphate starvation signals converge and interconnect with GA to promote the co-nuclear import of MYBS1 and GAMYB, resulting in the expression of a large set of GA-inducible hydrolases, transporters, and regulators that are essential for mobilization of nutrient reserves in the endosperm to support seedling growth. This chain is Transcription factor MYBS1, found in Oryza sativa subsp. japonica (Rice).